Here is a 511-residue protein sequence, read N- to C-terminus: Putative polyol transporter 1 (511 aa).

12 helical membrane passes run 27–47, 63–83, 94–114, 124–144, 151–171, 186–206, 284–304, 324–344, 351–371, 384–404, 424–444, and 454–474; these read FACAILASMTSIILGYDIGVM, VQLEILMGILNIYSLVGSGAA, YTIVLAGAFFFCGALLMGFAT, FVAGIGVGYAMMIAPVYTAEV, GFLTSFPEIFINIGILLGYVS, FMLGVGAVPSVFLAIGVLAMP, ILIACLGIHFAQQASGIDAVV, LATVAVGVVKTLFIVVGTCVV, ALLLTSMGGMFLSLTALGTSL, WAIGLAVTTVMTFVATFSIGA, GASLGVMLNRLMSGIIGMTFL, and GAFLLFAGVAAAAWVFFFTFL.

It belongs to the major facilitator superfamily. Sugar transporter (TC 2.A.1.1) family.

Its subcellular location is the membrane. Plasma membrane sugar-proton symporter. In Arabidopsis thaliana (Mouse-ear cress), this protein is Putative polyol transporter 1 (PLT1).